Consider the following 97-residue polypeptide: Lipolysis-activating peptide 1-alpha chain (97 aa).

A signal peptide spans 1 to 21; sequence MNIMLFCSVFILVSLTGLSVS. The 64-residue stretch at 25–88 folds into the LCN-type CS-alpha/beta domain; sequence PGNYPMSLYG…FWAAHKNHCK (64 aa). 3 disulfide bridges follow: Cys-39–Cys-62, Cys-48–Cys-67, and Cys-52–Cys-69.

This sequence belongs to the long (3 C-C) scorpion toxin superfamily. In terms of assembly, monomer (edited version) and heterodimer (non-edited version) of this alpha chain and a beta chain (AC P0CI43). As to expression, expressed by the venom gland.

It is found in the secreted. Functionally, the heterodimer non-edited LVP1 induces lipolysis in rat adipocytes. Induction of lipolysis by LVP1 appears to be mediated through the beta-2 adrenergic receptor pathway (ADRB2). Its function is as follows. The edited BmKBTx-like, similar to beta-toxins, may modulate voltage-gated sodium channels (Nav) and may block voltage-gated potassium channels (Kv). The chain is Lipolysis-activating peptide 1-alpha chain from Lychas mucronatus (Chinese swimming scorpion).